Consider the following 506-residue polypeptide: GTPase Der (506 aa).

EngA-type G domains lie at 3–166 (PVVA…GEQL) and 218–391 (IKIA…ACAT). GTP contacts are provided by residues 9–16 (GRPNVGKS), 56–60 (DTGGI), 118–121 (NKTD), 224–231 (GRPNVGKS), 271–275 (DTAGV), and 336–339 (NKWD). Positions 392–476 (QKTSTSMLTR…PIRIQFQEGN (85 aa)) constitute a KH-like domain.

This sequence belongs to the TRAFAC class TrmE-Era-EngA-EngB-Septin-like GTPase superfamily. EngA (Der) GTPase family. As to quaternary structure, associates with the 50S ribosomal subunit.

In terms of biological role, GTPase that plays an essential role in the late steps of ribosome biogenesis. The chain is GTPase Der from Actinobacillus pleuropneumoniae serotype 3 (strain JL03).